The following is a 166-amino-acid chain: Endoribonuclease YbeY (166 aa).

Zn(2+) contacts are provided by H126, H130, and H136.

Belongs to the endoribonuclease YbeY family. Zn(2+) serves as cofactor.

It localises to the cytoplasm. Its function is as follows. Single strand-specific metallo-endoribonuclease involved in late-stage 70S ribosome quality control and in maturation of the 3' terminus of the 16S rRNA. In Laribacter hongkongensis (strain HLHK9), this protein is Endoribonuclease YbeY.